The sequence spans 339 residues: Protein pelota homolog (339 aa).

This sequence belongs to the eukaryotic release factor 1 family. Pelota subfamily. Monomer. It depends on a divalent metal cation as a cofactor.

Its subcellular location is the cytoplasm. Its function is as follows. May function in recognizing stalled ribosomes, interact with stem-loop structures in stalled mRNA molecules, and effect endonucleolytic cleavage of the mRNA. May play a role in the release non-functional ribosomes and degradation of damaged mRNAs. Has endoribonuclease activity. The chain is Protein pelota homolog (pelA) from Thermoplasma acidophilum (strain ATCC 25905 / DSM 1728 / JCM 9062 / NBRC 15155 / AMRC-C165).